We begin with the raw amino-acid sequence, 398 residues long: Argininosuccinate synthase (398 aa).

8–16 (AYSGGLDTS) is a binding site for ATP. Tyr-87 is an L-citrulline binding site. Gly-117 contributes to the ATP binding site. L-aspartate is bound by residues Thr-119, Asn-123, and Asp-124. Asn-123 serves as a coordination point for L-citrulline. The L-citrulline site is built by Arg-127, Ser-175, Glu-260, and Tyr-272.

This sequence belongs to the argininosuccinate synthase family. Type 1 subfamily. As to quaternary structure, homotetramer.

Its subcellular location is the cytoplasm. It catalyses the reaction L-citrulline + L-aspartate + ATP = 2-(N(omega)-L-arginino)succinate + AMP + diphosphate + H(+). It participates in amino-acid biosynthesis; L-arginine biosynthesis; L-arginine from L-ornithine and carbamoyl phosphate: step 2/3. The chain is Argininosuccinate synthase from Mycobacterium tuberculosis (strain ATCC 25618 / H37Rv).